The following is a 258-amino-acid chain: Ribosomal RNA small subunit methyltransferase A (258 aa).

The S-adenosyl-L-methionine site is built by H13, L15, G40, E61, D86, and N106.

Belongs to the class I-like SAM-binding methyltransferase superfamily. rRNA adenine N(6)-methyltransferase family. RsmA subfamily.

The protein resides in the cytoplasm. It carries out the reaction adenosine(1518)/adenosine(1519) in 16S rRNA + 4 S-adenosyl-L-methionine = N(6)-dimethyladenosine(1518)/N(6)-dimethyladenosine(1519) in 16S rRNA + 4 S-adenosyl-L-homocysteine + 4 H(+). Functionally, specifically dimethylates two adjacent adenosines (A1518 and A1519) in the loop of a conserved hairpin near the 3'-end of 16S rRNA in the 30S particle. May play a critical role in biogenesis of 30S subunits. This is Ribosomal RNA small subunit methyltransferase A from Coxiella burnetii (strain CbuG_Q212) (Coxiella burnetii (strain Q212)).